The chain runs to 232 residues: Aquaporin Z (232 aa).

The next 2 membrane-spanning stretches (helical) occupy residues 8–28 (AFGT…AAGF) and 33–53 (IGLL…AFAI). The NPA 1 signature appears at 62–64 (NPA). 3 consecutive transmembrane segments (helical) span residues 84–104 (IIAQ…IATG), 130–150 (MLAA…VIMG), and 159–179 (GFAP…SIPV). The NPA 2 motif lies at 185–187 (NPA). Residues 201–221 (VSQLWLFWVAPIVGGVLGAVI) traverse the membrane as a helical segment.

This sequence belongs to the MIP/aquaporin (TC 1.A.8) family. As to quaternary structure, homotetramer.

It localises to the cell inner membrane. It catalyses the reaction H2O(in) = H2O(out). In terms of biological role, channel that permits osmotically driven movement of water in both directions. It is involved in the osmoregulation and in the maintenance of cell turgor during volume expansion in rapidly growing cells. It mediates rapid entry or exit of water in response to abrupt changes in osmolarity. The sequence is that of Aquaporin Z from Vibrio parahaemolyticus serotype O3:K6 (strain RIMD 2210633).